Reading from the N-terminus, the 354-residue chain is Probable L-ascorbate-6-phosphate lactonase UlaG (354 aa).

This sequence belongs to the UlaG family. A divalent metal cation is required as a cofactor.

The protein localises to the cytoplasm. It carries out the reaction L-ascorbate 6-phosphate + H2O = 3-dehydro-L-gulonate 6-phosphate. The protein operates within cofactor degradation; L-ascorbate degradation; D-xylulose 5-phosphate from L-ascorbate: step 1/4. Probably catalyzes the hydrolysis of L-ascorbate-6-P into 3-keto-L-gulonate-6-P. Is essential for L-ascorbate utilization under anaerobic conditions. This chain is Probable L-ascorbate-6-phosphate lactonase UlaG, found in Shigella boydii serotype 18 (strain CDC 3083-94 / BS512).